The following is a 520-amino-acid chain: Cytochrome P450 1A1 (520 aa).

Phe230 lines the substrate pocket. Residue Cys464 participates in heme binding.

It belongs to the cytochrome P450 family. Heme is required as a cofactor.

Its subcellular location is the endoplasmic reticulum membrane. The protein localises to the microsome membrane. It carries out the reaction an organic molecule + reduced [NADPH--hemoprotein reductase] + O2 = an alcohol + oxidized [NADPH--hemoprotein reductase] + H2O + H(+). Cytochromes P450 are a group of heme-thiolate monooxygenases. In liver microsomes, this enzyme is involved in an NADPH-dependent electron transport pathway. It oxidizes a variety of structurally unrelated compounds, including steroids, fatty acids, and xenobiotics. The polypeptide is Cytochrome P450 1A1 (cyp1a1) (Dicentrarchus labrax (European seabass)).